An 824-amino-acid chain; its full sequence is Serine/threonine-protein kinase SCH9 (824 aa).

Residues 1-23 show a composition bias toward polar residues; sequence MMNFFTSKSSNQDTGFSSQHQHP. Disordered regions lie at residues 1–37, 125–152, 221–272, and 285–327; these read MMNFFTSKSSNQDTGFSSQHQHPNGQNNGNNNSSTAG, NAGNVHGDTGGNSLQNSEDDNFSSSSTT, ESLG…SQLP, and THRS…SHPI. Residues 24–37 show a composition bias toward low complexity; it reads NGQNNGNNNSSTAG. The region spanning 166 to 378 is the C2 domain; it reads QREAAAAAYG…LAHASQHQWH (213 aa). Over residues 226–248 the composition is skewed to low complexity; it reads INNNNNNNNNNQHNQNQHINNNN. Composition is skewed to polar residues over residues 249 to 272 and 286 to 302; these read ENTNPDAASQHHNNNSGWNGSQLP and HRSSSQLDQLNSCSSVT. Over residues 307 to 321 the composition is skewed to low complexity; it reads RSSNSSSGSSNGPKN. Residues 412-671 form the Protein kinase domain; the sequence is FEVLRLLGKG…GRELRAHPFF (260 aa). Residues 418-426 and K441 contribute to the ATP site; that span reads LGKGTFGQV. The active-site Proton acceptor is the D538. At T570 the chain carries Phosphothreonine; by PKH1 or PKH2. The AGC-kinase C-terminal domain occupies 672-748; it reads ADIDWEALKQ…VDESAIDEHV (77 aa). Residue S711 is modified to Phosphoserine; by TORC1. T723 is modified (phosphothreonine; by TORC1). A Phosphoserine; by TORC1 modification is found at S726. T737 is modified (phosphothreonine; by TORC1). 2 positions are modified to phosphoserine; by TORC1: S758 and S765.

Belongs to the protein kinase superfamily. AGC Ser/Thr protein kinase family. cAMP subfamily. Post-translationally, phosphorylated by TORC1 in nutrient-replete conditions and during mechanical stress.

The enzyme catalyses L-seryl-[protein] + ATP = O-phospho-L-seryl-[protein] + ADP + H(+). It catalyses the reaction L-threonyl-[protein] + ATP = O-phospho-L-threonyl-[protein] + ADP + H(+). Activated by cAMP. Its function is as follows. Protein kinase that is part of growth control pathway which is at least partially redundant with the cAMP pathway. Regulates both BCY1 phosphorylation and MPK1 activity. Regulates ribosome biogenesis, translation initiation, and entry into stationary phase in a TORC1-dependent manner. This chain is Serine/threonine-protein kinase SCH9 (SCH9), found in Saccharomyces cerevisiae (strain ATCC 204508 / S288c) (Baker's yeast).